Consider the following 329-residue polypeptide: uncharacterized protein (329 aa).

Residues 1–32 (MSQDRGPRRPRRLEKCALISASATVLSLTASG) form the signal peptide. Cys-33 carries N-palmitoyl cysteine lipidation. Cys-33 carries S-diacylglycerol cysteine lipidation.

The protein resides in the cell membrane. This is an uncharacterized protein from Streptomyces coelicolor (strain ATCC BAA-471 / A3(2) / M145).